Here is a 235-residue protein sequence, read N- to C-terminus: Flagellar L-ring protein (235 aa).

The N-terminal stretch at Met1–Gly18 is a signal peptide. Residue Cys19 is the site of N-palmitoyl cysteine attachment. Cys19 carries the S-diacylglycerol cysteine lipid modification.

The protein belongs to the FlgH family. In terms of assembly, the basal body constitutes a major portion of the flagellar organelle and consists of four rings (L,P,S, and M) mounted on a central rod.

Its subcellular location is the cell outer membrane. It localises to the bacterial flagellum basal body. In terms of biological role, assembles around the rod to form the L-ring and probably protects the motor/basal body from shearing forces during rotation. The polypeptide is Flagellar L-ring protein (Chelativorans sp. (strain BNC1)).